Reading from the N-terminus, the 160-residue chain is Glyoxalase domain-containing protein 5 (160 aa).

The VOC domain occupies 33 to 153 (RLDHLVLTVR…DQNLIEVSNY (121 aa)).

The protein belongs to the glyoxalase I family.

This chain is Glyoxalase domain-containing protein 5 (glod5), found in Xenopus tropicalis (Western clawed frog).